A 237-amino-acid chain; its full sequence is Ribonuclease PH (237 aa).

Residues Arg-86 and 124-126 each bind phosphate; that span reads GTR.

This sequence belongs to the RNase PH family. In terms of assembly, homohexameric ring arranged as a trimer of dimers.

The catalysed reaction is tRNA(n+1) + phosphate = tRNA(n) + a ribonucleoside 5'-diphosphate. In terms of biological role, phosphorolytic 3'-5' exoribonuclease that plays an important role in tRNA 3'-end maturation. Removes nucleotide residues following the 3'-CCA terminus of tRNAs; can also add nucleotides to the ends of RNA molecules by using nucleoside diphosphates as substrates, but this may not be physiologically important. Probably plays a role in initiation of 16S rRNA degradation (leading to ribosome degradation) during starvation. The polypeptide is Ribonuclease PH (Erythrobacter litoralis (strain HTCC2594)).